The sequence spans 451 residues: Tubulin alpha-2 chain (451 aa).

Positions 12, 73, 142, 146, 147, 181, 208, and 230 each coordinate GTP. Asp73 contributes to the Mg(2+) binding site. Glu256 is a catalytic residue.

Belongs to the tubulin family. Dimer of alpha and beta chains. A typical microtubule is a hollow water-filled tube with an outer diameter of 25 nm and an inner diameter of 15 nM. Alpha-beta heterodimers associate head-to-tail to form protofilaments running lengthwise along the microtubule wall with the beta-tubulin subunit facing the microtubule plus end conferring a structural polarity. Microtubules usually have 13 protofilaments but different protofilament numbers can be found in some organisms and specialized cells. Mg(2+) serves as cofactor.

It localises to the cytoplasm. The protein localises to the cytoskeleton. It carries out the reaction GTP + H2O = GDP + phosphate + H(+). Its function is as follows. Tubulin is the major constituent of microtubules, a cylinder consisting of laterally associated linear protofilaments composed of alpha- and beta-tubulin heterodimers. Microtubules grow by the addition of GTP-tubulin dimers to the microtubule end, where a stabilizing cap forms. Below the cap, tubulin dimers are in GDP-bound state, owing to GTPase activity of alpha-tubulin. The chain is Tubulin alpha-2 chain (tubB) from Emericella nidulans (strain FGSC A4 / ATCC 38163 / CBS 112.46 / NRRL 194 / M139) (Aspergillus nidulans).